Reading from the N-terminus, the 219-residue chain is ER lumen protein-retaining receptor (219 aa).

Topologically, residues 1–5 (MNPFR) are lumenal. The chain crosses the membrane as a helical span at residues 6-26 (ILGDLSHLTSILILIHNIKTT). At 27–37 (RYIEGISFKTQ) the chain is on the cytoplasmic side. 2 helical membrane passes run 38 to 58 (TLYALVFITRYLDLLTFHWVS) and 59 to 79 (LYNALMKIFFIVSTAYIVVLL). The Cytoplasmic segment spans residues 80-98 (QGSKRTNTIAYNEMLMHDT). The helical transmembrane segment at 99–116 (FKIQHLLIGSALMSVFFH) threads the bilayer. Residues 117-118 (HK) lie on the Lumenal side of the membrane. The chain crosses the membrane as a helical span at residues 119-139 (FTFLELAWSFSVWLESVAILP). Residues 140 to 152 (QLYMLSKGGKTRS) are Cytoplasmic-facing. The helical transmembrane segment at 153 to 173 (LTVHYIFAMGLYRALYIPNWI) threads the bilayer. The Lumenal segment spans residues 174 to 185 (WRYSTEDKKLDK). Residues 186-206 (IAFFAGLLQTLLYSDFFYIYY) form a helical membrane-spanning segment. Residues 207 to 219 (TKVIRGKGFKLPK) are Cytoplasmic-facing.

This sequence belongs to the ERD2 family.

The protein resides in the endoplasmic reticulum membrane. Functionally, required for the retention of luminal endoplasmic reticulum proteins. Determines the specificity of the luminal ER protein retention system. Also required for normal vesicular traffic through the Golgi. This receptor strongly recognizes H-D-E-L and weakly recognizes D-D-E-L and K-D-E-L. In Saccharomyces cerevisiae (strain ATCC 204508 / S288c) (Baker's yeast), this protein is ER lumen protein-retaining receptor.